The primary structure comprises 246 residues: tRNA (guanine-N(1)-)-methyltransferase (246 aa).

Residues G113 and 133–138 (IGDYVL) contribute to the S-adenosyl-L-methionine site.

It belongs to the RNA methyltransferase TrmD family. Homodimer.

Its subcellular location is the cytoplasm. The catalysed reaction is guanosine(37) in tRNA + S-adenosyl-L-methionine = N(1)-methylguanosine(37) in tRNA + S-adenosyl-L-homocysteine + H(+). Functionally, specifically methylates guanosine-37 in various tRNAs. This is tRNA (guanine-N(1)-)-methyltransferase from Haemophilus influenzae (strain 86-028NP).